Consider the following 996-residue polypeptide: TBC1 domain family member 31 (996 aa).

WD repeat units follow at residues 33-74 (HSTS…LHGN), 75-116 (RFNL…TVTK), 117-157 (ELVS…LDTF), 158-200 (QRKR…CDTL), 201-248 (FCKY…ATGL), 249-296 (FRII…IQTC), and 297-334 (KLLF…NVYS). Residues 388–414 (TRVLKQDLTGDLENKENELSEGLNKKR) adopt a coiled-coil conformation. A Rab-GAP TBC domain is found at 424–599 (EYPTKYRMFI…RLFDNIFSNH (176 aa)). Positions 699 to 844 (ELDFLRERQT…LTTSQEAVAK (146 aa)) form a coiled coil. Positions 983-986 (RARN) are mediates direct interaction with PJA2.

In terms of assembly, interacts with PJA2; the interaction is direct and recruits PJA2 to centrosomes. Interacts with OFD1; regulates its activity in cilium assembly. Interacts with PRKACA.

It localises to the cytoplasm. The protein resides in the cytoskeleton. Its subcellular location is the microtubule organizing center. The protein localises to the centrosome. It is found in the centriolar satellite. It localises to the cilium basal body. Molecular adapter which is involved in cilium biogenesis. Part of a functional complex including OFD1 a centriolar protein involved in cilium assembly. Could regulate the cAMP-dependent phosphorylation of OFD1, and its subsequent ubiquitination by PJA2 which ultimately leads to its proteasomal degradation. The chain is TBC1 domain family member 31 from Mus musculus (Mouse).